Reading from the N-terminus, the 352-residue chain is Anthranilate phosphoribosyltransferase (352 aa).

Residues glycine 94, 97–98, serine 102, 104–107, 122–130, and serine 134 each bind 5-phospho-alpha-D-ribose 1-diphosphate; these read GS, NIST, and KHGNRAVSS. An anthranilate-binding site is contributed by glycine 94. Serine 106 contacts Mg(2+). Position 125 (asparagine 125) interacts with anthranilate. Arginine 180 provides a ligand contact to anthranilate. Mg(2+) is bound by residues aspartate 239 and glutamate 240.

Belongs to the anthranilate phosphoribosyltransferase family. In terms of assembly, homodimer. Mg(2+) is required as a cofactor.

It carries out the reaction N-(5-phospho-beta-D-ribosyl)anthranilate + diphosphate = 5-phospho-alpha-D-ribose 1-diphosphate + anthranilate. It participates in amino-acid biosynthesis; L-tryptophan biosynthesis; L-tryptophan from chorismate: step 2/5. Its function is as follows. Catalyzes the transfer of the phosphoribosyl group of 5-phosphorylribose-1-pyrophosphate (PRPP) to anthranilate to yield N-(5'-phosphoribosyl)-anthranilate (PRA). The polypeptide is Anthranilate phosphoribosyltransferase (Citrifermentans bemidjiense (strain ATCC BAA-1014 / DSM 16622 / JCM 12645 / Bem) (Geobacter bemidjiensis)).